A 199-amino-acid polypeptide reads, in one-letter code: MEKKKHGTNSISEALKVKAAVEQETATPEPTPQSETESADKIKQLEEALAAKEAEAAANWDKVLRERADLENYRKRVQKEKEELLKYGNESLILEILPAIDNMERALEHACDESMSAIVEGIKMTLCMLQSTLKKFGVAPVDAGKGTTFDPAYHQAMNQVESSEHEPNTIVSEFQKGYLLNERLLRPALVSVATAPKEQ.

The disordered stretch occupies residues methionine 1–aspartate 40. The span at glutamate 24–threonine 36 shows a compositional bias: polar residues.

It belongs to the GrpE family. Homodimer.

The protein localises to the cytoplasm. Functionally, participates actively in the response to hyperosmotic and heat shock by preventing the aggregation of stress-denatured proteins, in association with DnaK and GrpE. It is the nucleotide exchange factor for DnaK and may function as a thermosensor. Unfolded proteins bind initially to DnaJ; upon interaction with the DnaJ-bound protein, DnaK hydrolyzes its bound ATP, resulting in the formation of a stable complex. GrpE releases ADP from DnaK; ATP binding to DnaK triggers the release of the substrate protein, thus completing the reaction cycle. Several rounds of ATP-dependent interactions between DnaJ, DnaK and GrpE are required for fully efficient folding. The protein is Protein GrpE of Geotalea uraniireducens (strain Rf4) (Geobacter uraniireducens).